Consider the following 315-residue polypeptide: 4-hydroxy-3-methylbut-2-enyl diphosphate reductase (315 aa).

Cys-12 contributes to the [4Fe-4S] cluster binding site. The (2E)-4-hydroxy-3-methylbut-2-enyl diphosphate site is built by His-41 and His-74. Residues His-41 and His-74 each coordinate dimethylallyl diphosphate. Isopentenyl diphosphate is bound by residues His-41 and His-74. Cys-96 is a binding site for [4Fe-4S] cluster. A (2E)-4-hydroxy-3-methylbut-2-enyl diphosphate-binding site is contributed by His-124. Residue His-124 participates in dimethylallyl diphosphate binding. His-124 contacts isopentenyl diphosphate. Residue Glu-126 is the Proton donor of the active site. A (2E)-4-hydroxy-3-methylbut-2-enyl diphosphate-binding site is contributed by Thr-168. [4Fe-4S] cluster is bound at residue Cys-198. Ser-226, Ser-227, Asn-228, and Ser-270 together coordinate (2E)-4-hydroxy-3-methylbut-2-enyl diphosphate. The dimethylallyl diphosphate site is built by Ser-226, Ser-227, Asn-228, and Ser-270. Isopentenyl diphosphate is bound by residues Ser-226, Ser-227, Asn-228, and Ser-270.

This sequence belongs to the IspH family. [4Fe-4S] cluster serves as cofactor.

It catalyses the reaction isopentenyl diphosphate + 2 oxidized [2Fe-2S]-[ferredoxin] + H2O = (2E)-4-hydroxy-3-methylbut-2-enyl diphosphate + 2 reduced [2Fe-2S]-[ferredoxin] + 2 H(+). The enzyme catalyses dimethylallyl diphosphate + 2 oxidized [2Fe-2S]-[ferredoxin] + H2O = (2E)-4-hydroxy-3-methylbut-2-enyl diphosphate + 2 reduced [2Fe-2S]-[ferredoxin] + 2 H(+). It functions in the pathway isoprenoid biosynthesis; dimethylallyl diphosphate biosynthesis; dimethylallyl diphosphate from (2E)-4-hydroxy-3-methylbutenyl diphosphate: step 1/1. It participates in isoprenoid biosynthesis; isopentenyl diphosphate biosynthesis via DXP pathway; isopentenyl diphosphate from 1-deoxy-D-xylulose 5-phosphate: step 6/6. In terms of biological role, catalyzes the conversion of 1-hydroxy-2-methyl-2-(E)-butenyl 4-diphosphate (HMBPP) into a mixture of isopentenyl diphosphate (IPP) and dimethylallyl diphosphate (DMAPP). Acts in the terminal step of the DOXP/MEP pathway for isoprenoid precursor biosynthesis. The sequence is that of 4-hydroxy-3-methylbut-2-enyl diphosphate reductase from Pseudomonas syringae pv. tomato (strain ATCC BAA-871 / DC3000).